A 351-amino-acid chain; its full sequence is Amylovoran biosynthesis glycosyltransferase AmsD (351 aa).

Belongs to the glycosyltransferase group 1 family. Glycosyltransferase 4 subfamily.

Its pathway is glycan metabolism; exopolysaccharide biosynthesis. Involved in the biosynthesis of amylovoran which functions as a virulence factor. May be involved in the formation of galactose alpha-1,6 linkages in amylovoran. This Erwinia amylovora (Fire blight bacteria) protein is Amylovoran biosynthesis glycosyltransferase AmsD (amsD).